An 82-amino-acid polypeptide reads, in one-letter code: Small ribosomal subunit protein bS16 (82 aa).

It belongs to the bacterial ribosomal protein bS16 family.

The polypeptide is Small ribosomal subunit protein bS16 (Photorhabdus laumondii subsp. laumondii (strain DSM 15139 / CIP 105565 / TT01) (Photorhabdus luminescens subsp. laumondii)).